Reading from the N-terminus, the 634-residue chain is MKTSDILLLPTVLLTFLFHNCFAQAEPDLVVATRLGRVQGTRLPVPDRSHVIAFLGIPYAEPPIGKRRFKRAEPKKPWNNVFEAKEFSNACYQFVDTSYPGFPGIEMWNPNRVMSEDCLYLNVWVPPTPRPQNLTVMVWIYGGGFYSGSSSLDVYDGRYLAYTEKVVVVSMNYRVGAFGFLALNGSSDAPGNVGLYDQRLALQWVQENIHFFGGNPKQVTIFGESAGAASVGMHVLSPDSRPLFTRAILQSGVPNTPWATVTFDEARRRTTKLGKLVGCTWGNDTELIDCLRNKHPQELIDQEWQVLPWSSLFRFSFVPVVDGVFFPDTPDAMISSGNFKYTQILLGVNQDEGSYFLLYGAPGFSKDNESLISREDFLESVKMGVPHANDIGLEAVILQYTDWMDENNGQKNRDAMDDIVGDQNVICPLQHFAKSYAQYAALHAQSSAAAPGTLGWGNSGPTGYNSGNSHGAVYLYLFDHRASNLAWPEWMGVIHGYEIEFVFGLPLEKRLNYTAEEEKLSRRIMRYWANFARTGNPNVNTDGTMDSRRRWPQFSANEQKHVGLNTEPMKVHKGLRTQFCALWNRFLPRLLNITDNIDDVERQWKVEFHRWSSYMMHWKSQFDHYSKQERCTDL.

The signal sequence occupies residues 1–23 (MKTSDILLLPTVLLTFLFHNCFA). An intrachain disulfide couples C91 to C118. 2 N-linked (GlcNAc...) asparagine glycosylation sites follow: N133 and N184. S225 functions as the Acyl-ester intermediate in the catalytic mechanism. C279 and C290 form a disulfide bridge. A glycan (N-linked (GlcNAc...) asparagine) is linked at N283. The Charge relay system role is filled by E352. An N-linked (GlcNAc...) asparagine glycan is attached at N368. Residues C427 and C580 are joined by a disulfide bond. Catalysis depends on H495, which acts as the Charge relay system. N-linked (GlcNAc...) asparagine glycosylation is found at N512 and N592.

This sequence belongs to the type-B carboxylesterase/lipase family. As to quaternary structure, dimers and collagen-tailed forms, in which catalytic tetramers are associated with anchoring proteins that attach them to the basal lamina or to cell membranes. In the collagen-tailed forms, subunits are associated with a specific collagen, COLQ, which triggers the formation of isoform T tetramers from dimers.

The protein localises to the synapse. Its subcellular location is the secreted. It localises to the cell membrane. The catalysed reaction is acetylcholine + H2O = choline + acetate + H(+). Its function is as follows. Terminates signal transduction at the neuromuscular junction by rapid hydrolysis of the acetylcholine released into the synaptic cleft. This chain is Acetylcholinesterase (ache), found in Danio rerio (Zebrafish).